Here is a 250-residue protein sequence, read N- to C-terminus: tRNA:m(4)X modification enzyme TRM13 (250 aa).

Over residues 1–10 the composition is skewed to basic residues; it reads MGRAPAKRKP. The interval 1–20 is disordered; that stretch reads MGRAPAKRKPSSPPPPPPPG. A compositionally biased stretch (pro residues) spans 11-20; the sequence is SSPPPPPPPG. A CHHC U11-48K-type zinc finger spans residues 62–89; it reads LVPCPVDPSHTVLEENLEAHVGKCPLKK. Positions 65, 71, 81, and 85 each coordinate Zn(2+).

The protein belongs to the methyltransferase TRM13 family.

Its subcellular location is the nucleus. It is found in the cytoplasm. The enzyme catalyses cytidine(4) in tRNA(Pro) + S-adenosyl-L-methionine = 2'-O-methylcytidine(4) in tRNA(Pro) + S-adenosyl-L-homocysteine + H(+). It catalyses the reaction cytidine(4) in tRNA(Gly)(GCC) + S-adenosyl-L-methionine = 2'-O-methylcytidine(4) in tRNA(Gly)(GCC) + S-adenosyl-L-homocysteine + H(+). The catalysed reaction is adenosine(4) in tRNA(His) + S-adenosyl-L-methionine = 2'-O-methyladenosine(4) in tRNA(His) + S-adenosyl-L-homocysteine + H(+). Its function is as follows. tRNA methylase that catalyzes 2'-O-methyladenosine (Am) nucleoside formation on tRNA(Gly)(GCC) in vitro. May 2'-O-methylate cytidine(4) in tRNA(Pro) and tRNA(Gly)(GCC), and adenosine(4) in tRNA(His). Involved in salt stress tolerance. This is tRNA:m(4)X modification enzyme TRM13 from Oryza sativa subsp. japonica (Rice).